We begin with the raw amino-acid sequence, 424 residues long: Serine--tRNA ligase (424 aa).

An L-serine-binding site is contributed by threonine 230 to glutamate 232. Residues arginine 261–glutamate 263 and valine 277 contribute to the ATP site. Glutamate 284 is an L-serine binding site. ATP is bound at residue glutamate 348–serine 351. Threonine 382 contributes to the L-serine binding site.

The protein belongs to the class-II aminoacyl-tRNA synthetase family. Type-1 seryl-tRNA synthetase subfamily. Homodimer. The tRNA molecule binds across the dimer.

It localises to the cytoplasm. The catalysed reaction is tRNA(Ser) + L-serine + ATP = L-seryl-tRNA(Ser) + AMP + diphosphate + H(+). It carries out the reaction tRNA(Sec) + L-serine + ATP = L-seryl-tRNA(Sec) + AMP + diphosphate + H(+). The protein operates within aminoacyl-tRNA biosynthesis; selenocysteinyl-tRNA(Sec) biosynthesis; L-seryl-tRNA(Sec) from L-serine and tRNA(Sec): step 1/1. Catalyzes the attachment of serine to tRNA(Ser). Is also able to aminoacylate tRNA(Sec) with serine, to form the misacylated tRNA L-seryl-tRNA(Sec), which will be further converted into selenocysteinyl-tRNA(Sec). In Nocardioides sp. (strain ATCC BAA-499 / JS614), this protein is Serine--tRNA ligase.